We begin with the raw amino-acid sequence, 104 residues long: Large ribosomal subunit protein uL24 (104 aa).

This sequence belongs to the universal ribosomal protein uL24 family. In terms of assembly, part of the 50S ribosomal subunit.

In terms of biological role, one of two assembly initiator proteins, it binds directly to the 5'-end of the 23S rRNA, where it nucleates assembly of the 50S subunit. One of the proteins that surrounds the polypeptide exit tunnel on the outside of the subunit. The sequence is that of Large ribosomal subunit protein uL24 from Azotobacter vinelandii (strain DJ / ATCC BAA-1303).